Here is a 119-residue protein sequence, read N- to C-terminus: Outer membrane protein assembly factor BamE (119 aa).

An N-terminal signal peptide occupies residues 1–19; it reads MQFTKWFIALPLAVTALSG. Cys20 carries the N-palmitoyl cysteine lipid modification. Cys20 is lipidated: S-diacylglycerol cysteine.

It belongs to the BamE family. As to quaternary structure, part of the Bam complex.

The protein resides in the cell outer membrane. Part of the outer membrane protein assembly complex, which is involved in assembly and insertion of beta-barrel proteins into the outer membrane. In Vibrio cholerae serotype O1 (strain ATCC 39541 / Classical Ogawa 395 / O395), this protein is Outer membrane protein assembly factor BamE.